We begin with the raw amino-acid sequence, 109 residues long: Large ribosomal subunit protein uL24 (109 aa).

Belongs to the universal ribosomal protein uL24 family. In terms of assembly, part of the 50S ribosomal subunit.

Its function is as follows. One of two assembly initiator proteins, it binds directly to the 5'-end of the 23S rRNA, where it nucleates assembly of the 50S subunit. In terms of biological role, one of the proteins that surrounds the polypeptide exit tunnel on the outside of the subunit. In Hamiltonella defensa subsp. Acyrthosiphon pisum (strain 5AT), this protein is Large ribosomal subunit protein uL24.